We begin with the raw amino-acid sequence, 481 residues long: GTPase Der (481 aa).

EngA-type G domains lie at 3-166 (PVVA…ESDF) and 194-367 (IKLA…MSAT). Residues 9 to 16 (GRPNVGKS), 56 to 60 (DTGGI), 118 to 121 (NKVD), 200 to 207 (GKPNVGKS), 247 to 251 (DTAGV), and 312 to 315 (NKWD) each bind GTP. In terms of domain architecture, KH-like spans 368–452 (KRINTALLTQ…PIKIEFREGN (85 aa)).

This sequence belongs to the TRAFAC class TrmE-Era-EngA-EngB-Septin-like GTPase superfamily. EngA (Der) GTPase family. In terms of assembly, associates with the 50S ribosomal subunit.

Functionally, GTPase that plays an essential role in the late steps of ribosome biogenesis. The protein is GTPase Der of Alteromonas mediterranea (strain DSM 17117 / CIP 110805 / LMG 28347 / Deep ecotype).